The chain runs to 333 residues: Zinc-type alcohol dehydrogenase-like protein SACOL2177 (333 aa).

This sequence belongs to the zinc-containing alcohol dehydrogenase family. Quinone oxidoreductase subfamily.

The sequence is that of Zinc-type alcohol dehydrogenase-like protein SACOL2177 from Staphylococcus aureus (strain COL).